We begin with the raw amino-acid sequence, 276 residues long: Release factor glutamine methyltransferase (276 aa).

Residues 117–121, Asp140, Trp168, and Asn182 contribute to the S-adenosyl-L-methionine site; that span reads GTGTG. Residue 182-185 participates in substrate binding; it reads NPPY.

Belongs to the protein N5-glutamine methyltransferase family. PrmC subfamily.

The enzyme catalyses L-glutaminyl-[peptide chain release factor] + S-adenosyl-L-methionine = N(5)-methyl-L-glutaminyl-[peptide chain release factor] + S-adenosyl-L-homocysteine + H(+). Its function is as follows. Methylates the class 1 translation termination release factors RF1/PrfA and RF2/PrfB on the glutamine residue of the universally conserved GGQ motif. The sequence is that of Release factor glutamine methyltransferase from Yersinia pestis.